The primary structure comprises 191 residues: Putative endogenous retrovirus group K member 11-1 Env polyprotein (191 aa).

The tract at residues methionine 1–valine 191 is truncated surface protein.

It belongs to the beta type-B retroviral envelope protein family. HERV class-II K(HML-8) env subfamily. As to expression, cerebellum and testis.

Its subcellular location is the virion. Its function is as follows. Retroviral envelope proteins mediate receptor recognition and membrane fusion during early infection. Endogenous envelope proteins may have kept, lost or modified their original function during evolution. The polypeptide is Putative endogenous retrovirus group K member 11-1 Env polyprotein (ERVK11-1) (Homo sapiens (Human)).